The chain runs to 110 residues: Body wall hemoglobin (110 aa).

The Globin domain maps to 2–110; the sequence is VNWAAVVDAF…GAVDAIISHF (109 aa). A heme-binding site is contributed by H70.

It belongs to the globin family. In terms of assembly, homotetramer.

The protein is Body wall hemoglobin of Cerebratulus lacteus (Milky ribbon worm).